The following is a 1021-amino-acid chain: MAGKGKTAARTLEDLTLDSGYGGAADSFRSSSVSLCCSDTHLSYAHGGNCWHLTESMHSRHNSLDTVNTVLAEDTEILECSGQCAKLPELEEDVPWSLGEVEGALRKDEELCVGNASREILAKLSALVSRALVRIAREAQRMSLRYARCTKHEIQSAIKMVLSWTISVNCITAALSALSLYNMSTGDKFSRGKSTRCGLIFSVGKFFRWMVDSRVALRIHEHAAIYLSACMESLFREVFTRVQRSALVEKENGVPKFSVESLEQAINNDSELWGLLQPYQHLICGKNASGVLSLPDSLNLHRDQQRAGKTGEGHAYSQAELRTIEQSLLATRVGSIAELSDLVSRAMHHLQPLHIKNPSNGTPVHQNRTGSVHWEPEALYTLCYFMHCPQMEWENPNVEPSKITLHTERPFLVLPPLMEWIRVAVAHTEHRRSFSVDSDDVRQAARLLLPGVDCEPRQLKADDCFCATRKLDAASTEAKFLQDLGFRMLNCGRTDLVKQAVNLLGPDGINSMSEQGMTPLMYSCVRGDEAMVQMLLDAGADINSEVPSSLHKHPSVYPDTRQGTPLTFAVLHGHVPVVQLLLDARANVEGAIQESTENYTETPLQLASAAGNFELVSLLLERGADPLIGTTYRNGISSGPLGEMNSYSLAAAHGHRNVFRKLLSQVEKDKGDVLSLEEMLAEGSEAVERRAPQNEGTLRTGKAKLRALREAMYHSAEHGHVDITIDIRSLGVPWTLHTWLESLRTCFVQQRRPLIQGLLKDFSCIKEDEYTEELITHGLPLMFQILRASKNEVISQQLSVIFTQCYGPFPIPKLTEIKKKQTSRLDPHFLNNKEMSDVTFLVEGKPFYAHKVLLFTASPRFKSLLSNRPAAENTCIEISHVKYNIFQLVMQYLYCGGTESLHIRNTEIMELLSAAKFFQLDALQRHCEIICSKNITNDSCVDIYKHARFLGALELAGFIEGFFLKNMVLLIELENFKQLLYEVPADSPGPGPSYDVLHDLEQTLALRIRSIHLSTSKGSIV.

Residues 160-180 (MVLSWTISVNCITAALSALSL) form a helical membrane-spanning segment. ANK repeat units follow at residues 515–544 (QGMTPLMYSCVRGDEAMVQMLLDAGADINS), 561–590 (RQGTPLTFAVLHGHVPVVQLLLDARANVEG), 599–628 (YTETPLQLASAAGNFELVSLLLERGADPLI), and 642–671 (GEMNSYSLAAAHGHRNVFRKLLSQVEKDKG). One can recognise a BTB domain in the interval 836–902 (SDVTFLVEGK…LYCGGTESLH (67 aa)).

It localises to the membrane. The polypeptide is Ankyrin repeat- and BTB/POZ domain-containing protein 3-A (abtb3a) (Danio rerio (Zebrafish)).